A 98-amino-acid chain; its full sequence is Protein E7 (98 aa).

Residues 1–42 (MHGRLVTLKDIVLDLQPPDPVGLHCYEQLEDSSEDEVDKVDK) form an E7 terminal domain region. Positions 23 to 27 (LHCYE) match the LXCXE motif; interaction with host RB1 and TMEM173/STING motif. The segment at 58-94 (CCGCDSNVRLVVECTDGDIRQLQDLLLGTLNIVCPIC) is a zinc-finger region. A Nuclear export signal motif is present at residues 76-84 (IRQLQDLLL).

This sequence belongs to the papillomaviridae E7 protein family. As to quaternary structure, homodimer. Homooligomer. Interacts with host RB1; this interaction induces dissociation of RB1-E2F1 complex thereby disrupting RB1 activity. Interacts with host EP300; this interaction represses EP300 transcriptional activity. Interacts with protein E2; this interaction inhibits E7 oncogenic activity. Interacts with host TMEM173/STING; this interaction impairs the ability of TMEM173/STING to sense cytosolic DNA and promote the production of type I interferon (IFN-alpha and IFN-beta). Interacts with host ZUBR1. In terms of processing, highly phosphorylated.

The protein resides in the host cytoplasm. It localises to the host nucleus. In terms of biological role, plays a role in viral genome replication by driving entry of quiescent cells into the cell cycle. Stimulation of progression from G1 to S phase allows the virus to efficiently use the cellular DNA replicating machinery to achieve viral genome replication. E7 protein has both transforming and trans-activating activities. Induces the disassembly of the E2F1 transcription factor from RB1, with subsequent transcriptional activation of E2F1-regulated S-phase genes. Interferes with host histone deacetylation mediated by HDAC1 and HDAC2, leading to transcription activation. Also plays a role in the inhibition of both antiviral and antiproliferative functions of host interferon alpha. Interaction with host TMEM173/STING impairs the ability of TMEM173/STING to sense cytosolic DNA and promote the production of type I interferon (IFN-alpha and IFN-beta). The protein is Protein E7 of Homo sapiens (Human).